Reading from the N-terminus, the 376-residue chain is MFPSVQINALNQLSGETKEIERHALFVGVGTTNQGKLLALTPDSDFDKVFGETDTDLKKQVRAAMLNAGQNWFAHVYIAQEDGYDFVECVKKANQTASFEYCVNTRYLGVDKASIGKLQECYAELLAKFGRRTFFIQAVQGINHDQSDGETWDQYVQKLTTLQQTIVADHVCLVPLLFGNETGVLAGRLANRAVTVADSPARVQTGALVSLGSANKPLDKDGNELTLAHLKSLETARYSVPMWYPDYDGYYRADGRTLDVEGGDYQVIENLRVVDKVARKVRLLAIGKIADRSFNSTTSSTEYHKNYFAKPLRDMSKSATINGKDFPGECMPPKDDAITIVWQSKTKVTIYIKVRPYDCPKEITANIFLDLDSLGE.

This chain is Putative tail sheath protein, found in Haemophilus influenzae (Bacteriophage HP1).